The following is a 464-amino-acid chain: MKVAVVGSGLAGLTAAMSLAKKGIEVTVFGPKPKESNSYLAQAGIAFPISDGDSIISHVTDTIRGGKYLNDVTVVWNVISKSTEAYHFLTSLGIEFTSRELEGGHSFPRIFTIKNETGKYIIPVLEKHAKEMGVNFIRKFAEEVAIHNKKIVGVFVEGELLYFDAVIIASGGFSGLYKFTAGNPWNLGIPIGDLALKGVPLRDIEFIQFHPTGFIGKRTYLISEAVRGAGAKLVTGEGERFVNELETRDVVAREIYRKMLEGKGVFLDATGIEDFKRRFPYIYSFLRREGINPKRDLIPVTPVAHYTIGGISVDIFYRTPIKGLYAIGEAACNGFHGANRLASNSLLECIVSGIEVSRTVIREKPRGERKEAKYHGYEPGNVDEVRDIMWNHAGIIRREESLRLGLKKLEKVEADPRVKILAEAVLKCALAREESRGAHYREDYPYSREEFRRPSIFRVENCML.

FAD is bound by residues serine 8 to alanine 11 and asparagine 37 to glycine 44. Arginine 248 functions as the Proton donor/acceptor in the catalytic mechanism. Residues glutamate 329 and serine 345–leucine 346 each bind FAD.

This sequence belongs to the FAD-dependent oxidoreductase 2 family. NadB subfamily. FAD is required as a cofactor.

The protein localises to the cytoplasm. The enzyme catalyses L-aspartate + O2 = iminosuccinate + H2O2. It functions in the pathway cofactor biosynthesis; NAD(+) biosynthesis; iminoaspartate from L-aspartate (oxidase route): step 1/1. In terms of biological role, catalyzes the oxidation of L-aspartate to iminoaspartate, the first step in the de novo biosynthesis of NAD(+). This Pyrococcus furiosus (strain ATCC 43587 / DSM 3638 / JCM 8422 / Vc1) protein is L-aspartate oxidase (nadB).